Reading from the N-terminus, the 162-residue chain is NADH-quinone oxidoreductase subunit I (162 aa).

4Fe-4S ferredoxin-type domains follow at residues Arg-54–Glu-83 and Thr-93–Ile-122. Positions 63, 66, 69, 73, 102, 105, 108, and 112 each coordinate [4Fe-4S] cluster.

This sequence belongs to the complex I 23 kDa subunit family. As to quaternary structure, NDH-1 is composed of 14 different subunits. Subunits NuoA, H, J, K, L, M, N constitute the membrane sector of the complex. The cofactor is [4Fe-4S] cluster.

It is found in the cell inner membrane. It catalyses the reaction a quinone + NADH + 5 H(+)(in) = a quinol + NAD(+) + 4 H(+)(out). Its function is as follows. NDH-1 shuttles electrons from NADH, via FMN and iron-sulfur (Fe-S) centers, to quinones in the respiratory chain. The immediate electron acceptor for the enzyme in this species is believed to be ubiquinone. Couples the redox reaction to proton translocation (for every two electrons transferred, four hydrogen ions are translocated across the cytoplasmic membrane), and thus conserves the redox energy in a proton gradient. This chain is NADH-quinone oxidoreductase subunit I, found in Burkholderia ambifaria (strain MC40-6).